The sequence spans 200 residues: Small ribosomal subunit protein uS4c (200 aa).

One can recognise an S4 RNA-binding domain in the interval 88–148; that stretch reads IRLDNTIFNL…PKSYYIFKLC (61 aa).

This sequence belongs to the universal ribosomal protein uS4 family. In terms of assembly, part of the 30S ribosomal subunit.

The protein resides in the plastid. The protein localises to the apicoplast. In terms of biological role, one of the primary rRNA binding proteins, it binds directly to 16S rRNA where it nucleates assembly of the body of the 30S subunit. This is Small ribosomal subunit protein uS4c (rps4) from Eimeria tenella (Coccidian parasite).